The chain runs to 51 residues: Photosystem I reaction center subunit IX (51 aa).

A helical transmembrane segment spans residues 17-37; the sequence is FFSTAPVIALVFFTLTAGFLV.

Belongs to the PsaJ family.

The protein localises to the cellular thylakoid membrane. In terms of biological role, may help in the organization of the PsaE and PsaF subunits. In Acaryochloris marina (strain MBIC 11017), this protein is Photosystem I reaction center subunit IX.